The following is a 138-amino-acid chain: Large ribosomal subunit protein uL16 (138 aa).

This sequence belongs to the universal ribosomal protein uL16 family. Part of the 50S ribosomal subunit.

Functionally, binds 23S rRNA and is also seen to make contacts with the A and possibly P site tRNAs. The polypeptide is Large ribosomal subunit protein uL16 (Nitrosomonas europaea (strain ATCC 19718 / CIP 103999 / KCTC 2705 / NBRC 14298)).